The sequence spans 537 residues: Chaperonin GroEL 2 (537 aa).

ATP is bound by residues 29–32, 86–90, Gly-412, and Asp-495; these read TLGP and DGTTT.

This sequence belongs to the chaperonin (HSP60) family. As to quaternary structure, forms a cylinder of 14 subunits composed of two heptameric rings stacked back-to-back. Interacts with the co-chaperonin GroES.

It is found in the cytoplasm. The catalysed reaction is ATP + H2O + a folded polypeptide = ADP + phosphate + an unfolded polypeptide.. Its function is as follows. Together with its co-chaperonin GroES, plays an essential role in assisting protein folding. The GroEL-GroES system forms a nano-cage that allows encapsulation of the non-native substrate proteins and provides a physical environment optimized to promote and accelerate protein folding. The polypeptide is Chaperonin GroEL 2 (Paenarthrobacter aurescens (strain TC1)).